The primary structure comprises 107 residues: Iron-binding protein IscA (107 aa).

Fe cation-binding residues include cysteine 35, cysteine 99, and cysteine 101.

Belongs to the HesB/IscA family. In terms of assembly, homodimer; may form tetramers and higher multimers. It depends on Fe cation as a cofactor.

Functionally, is able to transfer iron-sulfur clusters to apo-ferredoxin. Multiple cycles of [2Fe2S] cluster formation and transfer are observed, suggesting that IscA acts catalytically. Recruits intracellular free iron so as to provide iron for the assembly of transient iron-sulfur cluster in IscU in the presence of IscS, L-cysteine and the thioredoxin reductase system TrxA/TrxB. The sequence is that of Iron-binding protein IscA from Cronobacter sakazakii (strain ATCC BAA-894) (Enterobacter sakazakii).